A 534-amino-acid chain; its full sequence is CTP synthase (534 aa).

The tract at residues 1-267 is amidoligase domain; that stretch reads MTKYIFVTGG…GDLIIERLAL (267 aa). Serine 13 contacts CTP. Serine 13 is a binding site for UTP. 14-19 lines the ATP pocket; sequence SVGKGI. Tyrosine 54 serves as a coordination point for L-glutamine. An ATP-binding site is contributed by aspartate 71. Residues aspartate 71 and glutamate 141 each contribute to the Mg(2+) site. Residues 148–150, 188–193, and lysine 224 each bind CTP; these read DIE and KTKPTQ. UTP-binding positions include 188 to 193 and lysine 224; that span reads KTKPTQ. In terms of domain architecture, Glutamine amidotransferase type-1 spans 292–534; that stretch reads TVAIVGKYVE…VQAALEQIAE (243 aa). Glycine 354 contributes to the L-glutamine binding site. Residue cysteine 381 is the Nucleophile; for glutamine hydrolysis of the active site. L-glutamine contacts are provided by residues 382 to 385, glutamate 405, and arginine 462; that span reads LGMQ. Catalysis depends on residues histidine 507 and glutamate 509.

The protein belongs to the CTP synthase family. As to quaternary structure, homotetramer.

The catalysed reaction is UTP + L-glutamine + ATP + H2O = CTP + L-glutamate + ADP + phosphate + 2 H(+). It catalyses the reaction L-glutamine + H2O = L-glutamate + NH4(+). The enzyme catalyses UTP + NH4(+) + ATP = CTP + ADP + phosphate + 2 H(+). It functions in the pathway pyrimidine metabolism; CTP biosynthesis via de novo pathway; CTP from UDP: step 2/2. Allosterically activated by GTP, when glutamine is the substrate; GTP has no effect on the reaction when ammonia is the substrate. The allosteric effector GTP functions by stabilizing the protein conformation that binds the tetrahedral intermediate(s) formed during glutamine hydrolysis. Inhibited by the product CTP, via allosteric rather than competitive inhibition. Functionally, catalyzes the ATP-dependent amination of UTP to CTP with either L-glutamine or ammonia as the source of nitrogen. Regulates intracellular CTP levels through interactions with the four ribonucleotide triphosphates. The protein is CTP synthase of Herpetosiphon aurantiacus (strain ATCC 23779 / DSM 785 / 114-95).